Consider the following 122-residue polypeptide: Pupal cuticle protein Edg-78E (122 aa).

The signal sequence occupies residues 1 to 16 (MYKYLFCLALIGCACA). Residues 36–96 (EGNYQYAYET…PVGDHLPTPP (61 aa)) form the Chitin-binding type R&amp;R domain.

Imaginal (anterior) epidermis.

Component of the cuticle of the pupa of fruit fly. This is Pupal cuticle protein Edg-78E (Edg78E) from Drosophila melanogaster (Fruit fly).